We begin with the raw amino-acid sequence, 250 residues long: NADH-quinone oxidoreductase subunit C (250 aa).

This sequence belongs to the complex I 30 kDa subunit family. As to quaternary structure, NDH-1 is composed of 14 different subunits. Subunits NuoB, C, D, E, F, and G constitute the peripheral sector of the complex.

It localises to the cell inner membrane. It carries out the reaction a quinone + NADH + 5 H(+)(in) = a quinol + NAD(+) + 4 H(+)(out). Functionally, NDH-1 shuttles electrons from NADH, via FMN and iron-sulfur (Fe-S) centers, to quinones in the respiratory chain. The immediate electron acceptor for the enzyme in this species is believed to be ubiquinone. Couples the redox reaction to proton translocation (for every two electrons transferred, four hydrogen ions are translocated across the cytoplasmic membrane), and thus conserves the redox energy in a proton gradient. The sequence is that of NADH-quinone oxidoreductase subunit C from Xanthomonas euvesicatoria pv. vesicatoria (strain 85-10) (Xanthomonas campestris pv. vesicatoria).